A 341-amino-acid polypeptide reads, in one-letter code: HTH-type transcriptional repressor PurR (341 aa).

The 55-residue stretch at 2-56 (ATIKDVAKRANVSTTTVSHVINKTRFVAEETRNAVWAAIKELHYSPSAVARSLKV) folds into the HTH lacI-type domain. The H-T-H motif DNA-binding region spans 4 to 23 (IKDVAKRANVSTTTVSHVIN). A DNA-binding region spans residues 48-56 (SAVARSLKV). Residues Y73, R190, T192, F221, and D275 each contribute to the hypoxanthine site.

In terms of assembly, homodimer.

It functions in the pathway purine metabolism; purine nucleotide biosynthesis [regulation]. In terms of biological role, is the main repressor of the genes involved in the de novo synthesis of purine nucleotides, regulating purB, purC, purEK, purF, purHD, purL, purMN and guaBA expression. PurR is allosterically activated to bind its cognate DNA by binding the purine corepressors, hypoxanthine or guanine, thereby effecting transcription repression. The chain is HTH-type transcriptional repressor PurR from Klebsiella pneumoniae (strain 342).